An 890-amino-acid polypeptide reads, in one-letter code: Nitrate reductase [NADH] 2 (890 aa).

Residue cysteine 165 participates in Mo-molybdopterin binding. One can recognise a Cytochrome b5 heme-binding domain in the interval 513–588 (SKMFSVSEVK…LEDYRIGELI (76 aa)). Heme is bound by residues histidine 548 and histidine 571. The FAD-binding FR-type domain maps to 634 to 746 (RQKIPCKLVS…KGPLGHIEYT (113 aa)). Residues 686–689 (RAYT), 703–707 (LIKVY), phenylalanine 708, phenylalanine 715, 720–722 (LMS), and threonine 773 each bind FAD.

Belongs to the nitrate reductase family. In terms of assembly, homodimer. Requires FAD as cofactor. Heme is required as a cofactor. Mo-molybdopterin serves as cofactor.

The enzyme catalyses nitrite + NAD(+) + H2O = nitrate + NADH + H(+). In terms of biological role, nitrate reductase is a key enzyme involved in the first step of nitrate assimilation in plants, fungi and bacteria. The polypeptide is Nitrate reductase [NADH] 2 (NIA2) (Phaseolus vulgaris (Kidney bean)).